Reading from the N-terminus, the 711-residue chain is Polyribonucleotide nucleotidyltransferase (711 aa).

Positions 486 and 492 each coordinate Mg(2+). The 60-residue stretch at Pro-553–Ile-612 folds into the KH domain. The 69-residue stretch at Gly-622 to Lys-690 folds into the S1 motif domain. Residues Lys-690 to Glu-711 form a disordered region. A compositionally biased stretch (low complexity) spans Glu-694–Glu-711.

The protein belongs to the polyribonucleotide nucleotidyltransferase family. As to quaternary structure, component of the RNA degradosome, which is a multiprotein complex involved in RNA processing and mRNA degradation. Mg(2+) serves as cofactor.

It is found in the cytoplasm. It carries out the reaction RNA(n+1) + phosphate = RNA(n) + a ribonucleoside 5'-diphosphate. In terms of biological role, involved in mRNA degradation. Catalyzes the phosphorolysis of single-stranded polyribonucleotides processively in the 3'- to 5'-direction. This Salmonella choleraesuis (strain SC-B67) protein is Polyribonucleotide nucleotidyltransferase.